The following is a 210-amino-acid chain: ATP-dependent dethiobiotin synthetase BioD (210 aa).

Residue 13-18 coordinates ATP; that stretch reads GIGKTV. Thr17 is a binding site for Mg(2+). The active site involves Lys33. Glu101 is a binding site for Mg(2+). ATP-binding positions include 101 to 104 and 185 to 187; these read EGAG and PWL.

It belongs to the dethiobiotin synthetase family. As to quaternary structure, homodimer. The cofactor is Mg(2+).

It is found in the cytoplasm. It carries out the reaction (7R,8S)-7,8-diammoniononanoate + CO2 + ATP = (4R,5S)-dethiobiotin + ADP + phosphate + 3 H(+). It participates in cofactor biosynthesis; biotin biosynthesis; biotin from 7,8-diaminononanoate: step 1/2. In terms of biological role, catalyzes a mechanistically unusual reaction, the ATP-dependent insertion of CO2 between the N7 and N8 nitrogen atoms of 7,8-diaminopelargonic acid (DAPA, also called 7,8-diammoniononanoate) to form a ureido ring. This Bradyrhizobium sp. (strain BTAi1 / ATCC BAA-1182) protein is ATP-dependent dethiobiotin synthetase BioD.